Here is a 101-residue protein sequence, read N- to C-terminus: Small ribosomal subunit protein uS14 (101 aa).

Belongs to the universal ribosomal protein uS14 family. Part of the 30S ribosomal subunit. Contacts proteins S3 and S10.

Functionally, binds 16S rRNA, required for the assembly of 30S particles and may also be responsible for determining the conformation of the 16S rRNA at the A site. This Baumannia cicadellinicola subsp. Homalodisca coagulata protein is Small ribosomal subunit protein uS14.